A 692-amino-acid chain; its full sequence is Elongation factor G (692 aa).

In terms of domain architecture, tr-type G spans 8–282 (PNTRNIGIMA…NVVAYLPSPV (275 aa)). GTP contacts are provided by residues 17–24 (AHIDAGKT), 81–85 (DTPGH), and 135–138 (NKMD).

It belongs to the TRAFAC class translation factor GTPase superfamily. Classic translation factor GTPase family. EF-G/EF-2 subfamily.

Its subcellular location is the cytoplasm. Catalyzes the GTP-dependent ribosomal translocation step during translation elongation. During this step, the ribosome changes from the pre-translocational (PRE) to the post-translocational (POST) state as the newly formed A-site-bound peptidyl-tRNA and P-site-bound deacylated tRNA move to the P and E sites, respectively. Catalyzes the coordinated movement of the two tRNA molecules, the mRNA and conformational changes in the ribosome. This chain is Elongation factor G, found in Brevibacillus brevis (strain 47 / JCM 6285 / NBRC 100599).